The following is a 115-amino-acid chain: NADH-ubiquinone oxidoreductase chain 3 (115 aa).

Transmembrane regions (helical) follow at residues Leu3–Trp23, Phe55–Leu75, and Leu86–Trp106.

Belongs to the complex I subunit 3 family. In terms of assembly, core subunit of respiratory chain NADH dehydrogenase (Complex I) which is composed of 45 different subunits. Interacts with TMEM186. Interacts with TMEM242.

It is found in the mitochondrion inner membrane. The catalysed reaction is a ubiquinone + NADH + 5 H(+)(in) = a ubiquinol + NAD(+) + 4 H(+)(out). Its function is as follows. Core subunit of the mitochondrial membrane respiratory chain NADH dehydrogenase (Complex I) which catalyzes electron transfer from NADH through the respiratory chain, using ubiquinone as an electron acceptor. Essential for the catalytic activity of complex I. The sequence is that of NADH-ubiquinone oxidoreductase chain 3 from Loxodonta africana (African elephant).